Here is a 92-residue protein sequence, read N- to C-terminus: Small ribosomal subunit protein uS19c (92 aa).

This sequence belongs to the universal ribosomal protein uS19 family.

It is found in the plastid. Its subcellular location is the chloroplast. In terms of biological role, protein S19 forms a complex with S13 that binds strongly to the 16S ribosomal RNA. The protein is Small ribosomal subunit protein uS19c of Thalassiosira pseudonana (Marine diatom).